Here is a 304-residue protein sequence, read N- to C-terminus: UDP-3-O-acyl-N-acetylglucosamine deacetylase (304 aa).

The Zn(2+) site is built by histidine 78, histidine 237, and aspartate 241. Catalysis depends on histidine 264, which acts as the Proton donor.

Belongs to the LpxC family. It depends on Zn(2+) as a cofactor.

The catalysed reaction is a UDP-3-O-[(3R)-3-hydroxyacyl]-N-acetyl-alpha-D-glucosamine + H2O = a UDP-3-O-[(3R)-3-hydroxyacyl]-alpha-D-glucosamine + acetate. Its pathway is glycolipid biosynthesis; lipid IV(A) biosynthesis; lipid IV(A) from (3R)-3-hydroxytetradecanoyl-[acyl-carrier-protein] and UDP-N-acetyl-alpha-D-glucosamine: step 2/6. Functionally, catalyzes the hydrolysis of UDP-3-O-myristoyl-N-acetylglucosamine to form UDP-3-O-myristoylglucosamine and acetate, the committed step in lipid A biosynthesis. The chain is UDP-3-O-acyl-N-acetylglucosamine deacetylase from Legionella pneumophila (strain Lens).